The following is a 1377-amino-acid chain: Protein RhsA (1377 aa).

28 repeat units span residues 330–352, 353–374, 375–417, 418–438, 439–460, 461–481, 482–502, 503–525, 526–546, 547–567, 568–588, 589–609, 610–629, 630–650, 651–671, 672–691, 692–711, 712–734, 735–758, 808–828, 829–850, 851–871, 872–894, 895–930, 931–959, 960–984, 985–1019, and 1162–1186. The 28 X approximate tandem repeats stretch occupies residues 330 to 1186; that stretch reads GKQVRSFTYD…LNEENPHQLQ (857 aa). The interval 1356–1377 is disordered; it reads DAKSTQKAWNCRHSRQSNDKKR.

The protein belongs to the RHS family.

Rhs elements have a nonessential function. They may play an important role in the natural ecology of the cell. This Escherichia coli (strain K12) protein is Protein RhsA (rhsA).